A 428-amino-acid polypeptide reads, in one-letter code: Putative G-protein coupled receptor F59B2.13 (428 aa).

Residues 1–30 lie on the Extracellular side of the membrane; sequence MSNNTTIPSKTATDICLTDRQMSLSVSSTE. N-linked (GlcNAc...) asparagine glycosylation is found at asparagine 3 and asparagine 4. A helical membrane pass occupies residues 31-51; the sequence is GVLIGTIIPILVLFGISGNIL. Residues 52–67 are Cytoplasmic-facing; it reads NLTVLLAPNLRTRSNQ. Residues 68-88 form a helical membrane-spanning segment; that stretch reads LLACLAVADIVSLVVILPHSM. Residues 89–110 are Extracellular-facing; sequence AHYETFETALWFRKFYGKYKFQ. A helical membrane pass occupies residues 111-131; the sequence is IIAMTNWSIATATWLVFVICL. Topologically, residues 132–154 are cytoplasmic; sequence ERLIIIKYPLSVRKQAKFFTPRN. A helical membrane pass occupies residues 155-175; the sequence is VVTIIVVTTFILTSYNHVSHA. The Extracellular portion of the chain corresponds to 176 to 222; the sequence is CAEKLFCNGTQYHVACLGIDSERWFRNEPNPNSEFMKSVVRVAPQVN. Asparagine 183 carries an N-linked (GlcNAc...) asparagine glycan. A helical membrane pass occupies residues 223–243; the sequence is AIFVVLIPVVLVIIFNVMLIL. At 244-278 the chain is on the cytoplasmic side; sequence TLRQRTKLFEPSKTIRGDSQFTQLQSKTEHKVTIT. A helical transmembrane segment spans residues 279 to 299; it reads VTAIVTCFTITQSPSAFVTFL. Residues 300–309 are Extracellular-facing; sequence SSYVHRDWVT. A helical membrane pass occupies residues 310 to 330; it reads LSAICTILVVLGKALNFVLFC. Residues 331–428 lie on the Cytoplasmic side of the membrane; the sequence is LSSASFRQRL…KEFRRGTSFV (98 aa).

It belongs to the G-protein coupled receptor 1 family.

It is found in the cell membrane. The protein is Putative G-protein coupled receptor F59B2.13 of Caenorhabditis elegans.